The following is a 390-amino-acid chain: MATLLEQLSTMTVVVADTGDLDAIRKFTPRDATTNPSLILAAAQIPAYQSLIDEALHSSRQLLGNSAAVEEVVHEALDEICVIFGKEILKIVPGRVSTEVDARLSFNTEATIAKAHKLIGLYNDAGITNDRVLIKIASTWEGIKAAEVLEKDGIHCNLTLLFGFSQAVACAEAGVTLISPFVGRILDWYKASTGRDSYAGPEDPGVISVTKIFNYFKTYDYKTEIMGASFRNLDEIIELAGCDLLTISPKLLDQLGSTEAPLKRKLDAVNPVAAESQIHVDKESFESMMRADRMAFEKLDEGIRGFSKAIETLEAQLAHRLAVLEGGAAFCHVVQEIFMLNDLDGDGCITREEWLGSDAVFDALDHDHDGRLLQEDVRSGLGAALALTTA.

Lys135 acts as the Schiff-base intermediate with substrate in catalysis. EF-hand domains lie at 329–364 (AFCH…FDAL) and 365–388 (DHDH…LALT). Asp342, Asp344, Asp346, Cys348, Glu353, Asp365, Asp367, Asp369, Arg371, and Asp376 together coordinate Ca(2+).

It belongs to the transaldolase family. Type 1 subfamily.

The protein localises to the cytoplasm. The catalysed reaction is D-sedoheptulose 7-phosphate + D-glyceraldehyde 3-phosphate = D-erythrose 4-phosphate + beta-D-fructose 6-phosphate. It functions in the pathway carbohydrate degradation; pentose phosphate pathway; D-glyceraldehyde 3-phosphate and beta-D-fructose 6-phosphate from D-ribose 5-phosphate and D-xylulose 5-phosphate (non-oxidative stage): step 2/3. In terms of biological role, transaldolase is important for the balance of metabolites in the pentose-phosphate pathway. The protein is Transaldolase of Prochlorococcus marinus (strain MIT 9313).